A 605-amino-acid chain; its full sequence is Protein kinase wis1 (605 aa).

Over residues 1 to 20 (MSSPNNQPLSCSLRQLSISP) the composition is skewed to polar residues. A disordered region spans residues 1 to 141 (MSSPNNQPLS…TPPGPFPGGL (141 aa)). Low complexity-rich tracts occupy residues 31–73 (GSLL…SSPS) and 90–105 (RLGR…SLNL). Residues 106-115 (DMKDPSEKPR) show a composition bias toward basic and acidic residues. The residue at position 168 (Ser168) is a Phosphoserine. A compositionally biased stretch (polar residues) spans 188-200 (SQLAGRLSNSPVK). Residues 188–263 (SQLAGRLSNS…PSSMASRRGL (76 aa)) are disordered. Over residues 244–256 (SNSNPTSPVSPSS) the composition is skewed to low complexity. Ser253 carries the post-translational modification Phosphoserine. The Protein kinase domain occupies 320–579 (IIKLEELGKG…YHELANHPWL (260 aa)). Residues 326 to 334 (LGKGNYGVV) and Lys349 each bind ATP. The Proton acceptor role is filled by Asp441. At Ser469 the chain carries Phosphoserine. Thr473 is modified (phosphothreonine).

This sequence belongs to the protein kinase superfamily. STE Ser/Thr protein kinase family. MAP kinase kinase subfamily. Post-translationally, dephosphorylated by pyp1 and pyp2.

The enzyme catalyses L-seryl-[protein] + ATP = O-phospho-L-seryl-[protein] + ADP + H(+). The catalysed reaction is L-threonyl-[protein] + ATP = O-phospho-L-threonyl-[protein] + ADP + H(+). It catalyses the reaction L-tyrosyl-[protein] + ATP = O-phospho-L-tyrosyl-[protein] + ADP + H(+). Functionally, dosage-dependent regulator of mitosis with serine/ threonine protein kinase activity. May play a role in the integration of nutritional sensing with the control over entry into mitosis. It may interact with cdc25, wee1 and win1. May activate sty1. This is Protein kinase wis1 (wis1) from Schizosaccharomyces pombe (strain 972 / ATCC 24843) (Fission yeast).